Consider the following 152-residue polypeptide: Non-specific lipid transfer protein GPI-anchored 8 (152 aa).

The signal sequence occupies residues 1-23 (MNITRILGVVTTVVILYSVQVTA). Disulfide bonds link cysteine 42–cysteine 56, cysteine 57–cysteine 98, and cysteine 70–cysteine 107. Asparagine 108 carries an N-linked (GlcNAc...) asparagine glycan. Residue serine 124 is the site of GPI-anchor amidated serine attachment. Residues 125-152 (GNSFSTKKNTALAITFFGFSFVFLGMII) constitute a propeptide, removed in mature form.

This sequence belongs to the plant LTP family.

Its subcellular location is the cell membrane. Functionally, probable lipid transfer protein. The sequence is that of Non-specific lipid transfer protein GPI-anchored 8 from Arabidopsis thaliana (Mouse-ear cress).